The following is a 95-amino-acid chain: Small ribosomal subunit protein bS18 (95 aa).

It belongs to the bacterial ribosomal protein bS18 family. In terms of assembly, part of the 30S ribosomal subunit. Forms a tight heterodimer with protein bS6.

In terms of biological role, binds as a heterodimer with protein bS6 to the central domain of the 16S rRNA, where it helps stabilize the platform of the 30S subunit. This is Small ribosomal subunit protein bS18 from Rickettsia prowazekii (strain Madrid E).